Consider the following 93-residue polypeptide: Alpha-defensin 13 (93 aa).

A signal peptide spans 1–19; it reads MKTLVLLSALVLLAFQVQA. Residues 20–58 constitute a propeptide that is removed on maturation; the sequence is DPIQNTDEETKTEEQPGEEDQAVSVSFGDPEGTSLQEES. The tract at residues 22–54 is disordered; sequence IQNTDEETKTEEQPGEEDQAVSVSFGDPEGTSL. Intrachain disulfides connect Cys-64/Cys-92, Cys-66/Cys-81, and Cys-71/Cys-91.

The protein belongs to the alpha-defensin family. Paneth cells of the small bowel.

Its subcellular location is the secreted. Functionally, probably contributes to the antimicrobial barrier function of the small bowel mucosa. In Mus musculus (Mouse), this protein is Alpha-defensin 13 (Defa13).